A 193-amino-acid chain; its full sequence is Interferon type A3 (193 aa).

Residues 1-31 (MAVPASPQHPRGYGILLLTLLLKALATTASA) form the signal peptide. 3 disulfides stabilise this stretch: cysteine 32–cysteine 129, cysteine 61–cysteine 155, and cysteine 68–cysteine 168. Residues asparagine 65, asparagine 71, asparagine 108, and asparagine 186 are each glycosylated (N-linked (GlcNAc...) asparagine).

The protein belongs to the alpha/beta interferon family.

Its subcellular location is the secreted. Has antiviral activities. The chain is Interferon type A3 (IFNA3) from Gallus gallus (Chicken).